Reading from the N-terminus, the 720-residue chain is Secreted RxLR effector protein 138 (720 aa).

The first 20 residues, 1–20 (MRSAFYVAIVLLVAAGSQTA), serve as a signal peptide directing secretion. Positions 56-71 (RNLKDDFMFSAGDEER) match the RxLR-dEER motif. Residues 264–335 (ESNTRKRNNV…VAPPEPSRLD (72 aa)) form a disordered region. Residues 320–335 (KQHDHRVAPPEPSRLD) are compositionally biased toward basic and acidic residues. N-linked (GlcNAc...) asparagine glycosylation is present at Asn609.

Belongs to the RxLR effector family.

The protein resides in the secreted. Its subcellular location is the host nucleus. In terms of biological role, secreted effector that acts as an elicitor that induces cell death in host plant cells. The protein is Secreted RxLR effector protein 138 of Plasmopara viticola (Downy mildew of grapevine).